The chain runs to 564 residues: MGQSQDNTQLTTASPQAEKDLSSNDNPPESEPAAPKKGARFWLVFIAIALTTFLAALDTSIISTALPTITSDLGSNSLYVWIVDSYLLASTATIPIFAQAANIYGRRSLTLIAVCLFTLGSGLCGGAHNTAMMIGGRSVQGVGGGGILTMSEIVVCDMVSVRERGMYAGIIGGVWAIASVIAPIMGGAFAQNVSWRWIFYINLPIAGVVLVALIVFLKLARPPTGTFKEQMSRIDWGGSVLLIASVTAVVLALSWGGSEHPWSSWRTLVPLILGLVGQLAFFAYQGAPWLKEPTMPLRLFGNRTSSTLFVISFVHSMLLFWVCYFLPVYFQAVKEASPARSAVMLFPIATTSAPGGVIAGIFITKTGKYRVWHFVGFALMSISCGLFTLLDDKSSIGRWVGFQLLFGFGTGFVFTSCLPPILASLPDSDVATATGAWTFLRNFGSIWGIAIPAAAFNTRVNSSLDKVSSGTVRDMLVNGGAYEHATKTFIQAFNNTPRLKAEIVQVYMDGLKLVWQVSIAFSVLGFVLAFLVKSLTLRDELNTEYGLEEKDTSKEKSSEEGNAS.

Polar residues predominate over residues 1 to 15; sequence MGQSQDNTQLTTASP. The interval 1–35 is disordered; it reads MGQSQDNTQLTTASPQAEKDLSSNDNPPESEPAAP. 5 helical membrane passes run 42–62, 78–98, 108–128, 141–161, and 170–190; these read WLVFIAIALTTFLAALDTSII, LYVWIVDSYLLASTATIPIFA, SLTLIAVCLFTLGSGLCGGAH, GVGGGGILTMSEIVVCDMVSV, and IIGGVWAIASVIAPIMGGAFA. An N-linked (GlcNAc...) asparagine glycan is attached at Asn-192. 3 helical membrane-spanning segments follow: residues 197–217, 236–256, and 268–288; these read WIFYINLPIAGVVLVALIVFL, WGGSVLLIASVTAVVLALSWG, and LVPLILGLVGQLAFFAYQGAP. An N-linked (GlcNAc...) asparagine glycan is attached at Asn-302. The next 5 helical transmembrane spans lie at 308-328, 343-363, 371-391, 404-424, and 436-456; these read LFVISFVHSMLLFWVCYFLPV, VMLFPIATTSAPGGVIAGIFI, VWHFVGFALMSISCGLFTLLD, LLFGFGTGFVFTSCLPPILAS, and AWTFLRNFGSIWGIAIPAAAF. Asn-461 is a glycosylation site (N-linked (GlcNAc...) asparagine). A helical membrane pass occupies residues 512 to 532; the sequence is KLVWQVSIAFSVLGFVLAFLV.

Belongs to the major facilitator superfamily. TCR/Tet family.

The protein resides in the membrane. Its function is as follows. MFS-type efflux pump; part of the gene cluster that mediates the biosynthesis of the mycotoxin lucilactaene and the lucilactaene-related compound NG-391 that act as cell cycle inhibitors with potent growth inhibitory activity against malarial parasites, moderate growth inhibitory activity against cancer cells, and no activity against bacteria and fungi. The chain is MFS-type efflux pump LUC4 from Fusarium sp.